We begin with the raw amino-acid sequence, 197 residues long: Negative modulator of initiation of replication (197 aa).

Interaction with DNA regions lie at residues 100–101 (AV), 129–133 (RTRVY), and 163–169 (NTNSGRK).

Belongs to the SeqA family. Homodimer. Polymerizes to form helical filaments.

It is found in the cytoplasm. Its function is as follows. Negative regulator of replication initiation, which contributes to regulation of DNA replication and ensures that replication initiation occurs exactly once per chromosome per cell cycle. Binds to pairs of hemimethylated GATC sequences in the oriC region, thus preventing assembly of replication proteins and re-initiation at newly replicated origins. Repression is relieved when the region becomes fully methylated. The chain is Negative modulator of initiation of replication from Haemophilus influenzae (strain ATCC 51907 / DSM 11121 / KW20 / Rd).